The chain runs to 204 residues: Thymidylate kinase (204 aa).

Residue 9-16 (GIEASGKT) participates in ATP binding.

The protein belongs to the thymidylate kinase family.

It catalyses the reaction dTMP + ATP = dTDP + ADP. Functionally, phosphorylation of dTMP to form dTDP in both de novo and salvage pathways of dTTP synthesis. The polypeptide is Thymidylate kinase (Sulfurihydrogenibium sp. (strain YO3AOP1)).